Consider the following 396-residue polypeptide: Elongation factor Tu (396 aa).

In terms of domain architecture, tr-type G spans 10-206 (KPHVNIGTIG…AVDAYIPEPE (197 aa)). The G1 stretch occupies residues 19–26 (GHVDHGKT). Residue 19–26 (GHVDHGKT) participates in GTP binding. Threonine 26 is a Mg(2+) binding site. A G2 region spans residues 60-64 (GITIS). Residues 81–84 (DCPG) are G3. GTP-binding positions include 81 to 85 (DCPGH) and 136 to 139 (NKVD). The tract at residues 136-139 (NKVD) is G4. The tract at residues 174–176 (SAL) is G5.

This sequence belongs to the TRAFAC class translation factor GTPase superfamily. Classic translation factor GTPase family. EF-Tu/EF-1A subfamily. As to quaternary structure, monomer.

Its subcellular location is the cytoplasm. It catalyses the reaction GTP + H2O = GDP + phosphate + H(+). Its function is as follows. GTP hydrolase that promotes the GTP-dependent binding of aminoacyl-tRNA to the A-site of ribosomes during protein biosynthesis. This chain is Elongation factor Tu, found in Magnetococcus marinus (strain ATCC BAA-1437 / JCM 17883 / MC-1).